We begin with the raw amino-acid sequence, 879 residues long: Pentatricopeptide repeat-containing protein At1g71210, mitochondrial (879 aa).

The transit peptide at 1–44 (MLRCWSVTVERSCEGMLLRRRILSLSASSFRNFTSGNNGDAIPF) directs the protein to the mitochondrion. PPR repeat units follow at residues 181-215 (SLRL…GLDL), 216-246 (DSFG…ISVR), 250-280 (CAVT…LLPN), 285-319 (CGSG…GTVN), 320-355 (MDRA…GCEL), 356-390 (EVFR…GVSP), 391-425 (NKKT…GFAP), 426-460 (TAMS…GHFL), 461-495 (GGKT…DLLP), 496-530 (KRIA…GVDT), 531-565 (SFKM…GYTP), 566-597 (TRSL…FQLS), 602-636 (KVQA…GITP), 637-667 (TVAS…LREQ), 671-705 (KKRL…GLQP), and 706-740 (SIEC…GRRI).

The protein belongs to the PPR family. P subfamily.

It is found in the mitochondrion. This is Pentatricopeptide repeat-containing protein At1g71210, mitochondrial from Arabidopsis thaliana (Mouse-ear cress).